A 400-amino-acid polypeptide reads, in one-letter code: MAANYSSTGSRKEHVKVTSDPQPGFLERLSETSGGMFVGLVTFLLSFYLIFTNEGRALKTANLLAEGLSLVVSPDSIHSVAPENEGRLVHIIGALRTSKLLSDPNYGVHLPAVKLRRHVEMYQWVETEESNEYTEDGQVKKETKYSYNTEWRSEIVSSKNFDREIGHKNPSAMAVESFTATAPFVQIGRFFLSAGLIDKIDNFKPLSLAKLEDPHVDIIRRGDFFYHSENPKYPEVGDVRVSFSYAGLSSDDPDLGPAHVVTVIARQRGDQLIPYSTKSGDTLLLLHHGDFSAEEVFRREQKSNSMKTWGLRAAGWMAMFMGLNLMTRILYTLVDWFPVFRDLVNIGLKAFAFCVATSLTLLTVAAGWLFYRPLWAALLGCLALVPIIIARTRVPTKKLE.

Residues 1–23 (MAANYSSTGSRKEHVKVTSDPQP) form a disordered region. Residue alanine 2 is modified to N-acetylalanine. The Nuclear portion of the chain corresponds to 2 to 31 (AANYSSTGSRKEHVKVTSDPQPGFLERLSE). Residues 32-52 (TSGGMFVGLVTFLLSFYLIFT) traverse the membrane as a helical segment. Residues 53–313 (NEGRALKTAN…NSMKTWGLRA (261 aa)) lie on the Perinuclear space side of the membrane. A helical membrane pass occupies residues 314–334 (AGWMAMFMGLNLMTRILYTLV). Topologically, residues 335 to 345 (DWFPVFRDLVN) are nuclear. Residues 346 to 366 (IGLKAFAFCVATSLTLLTVAA) traverse the membrane as a helical segment. At 367–368 (GW) the chain is on the perinuclear space side. The helical transmembrane segment at 369–389 (LFYRPLWAALLGCLALVPIII) threads the bilayer. At 390-400 (ARTRVPTKKLE) the chain is on the nuclear side.

The protein belongs to the TMEM43 family. Can form oligomers through the transmembrane domains. Interacts with EMD; the interaction retains EMD at the inner nuclear membrane. Interacts with LMNA and LMNB2. Interacts with SUN2. Interacts with RNF26; this interaction is important to modulate innate immune signaling through the cGAS-STING pathway. Interacts with CARD10. Interacts with gap junctions proteins GJB2/Cx26 and GJB4/Cx30.

It is found in the endoplasmic reticulum membrane. It localises to the nucleus inner membrane. The protein resides in the cell membrane. May have an important role in maintaining nuclear envelope structure by organizing protein complexes at the inner nuclear membrane. Required for retaining emerin at the inner nuclear membrane. Plays a role in the modulation of innate immune signaling through the cGAS-STING pathway by interacting with RNF26. In addition, functions as a critical signaling component in mediating NF-kappa-B activation by acting downstream of EGFR and upstream of CARD10. Contributes to passive conductance current in cochlear glia-like supporting cells, mediated by gap junctions and necessary for hearing. This chain is Transmembrane protein 43 (Tmem43), found in Rattus norvegicus (Rat).